The primary structure comprises 429 residues: Probable M18 family aminopeptidase 2 (429 aa).

His-82, His-156, and His-401 together coordinate Zn(2+).

The protein belongs to the peptidase M18 family. Zn(2+) is required as a cofactor.

This is Probable M18 family aminopeptidase 2 from Pseudomonas entomophila (strain L48).